A 288-amino-acid polypeptide reads, in one-letter code: uncharacterized protein (288 aa).

Residues glycine 6–histidine 20 and threonine 97 each bind NAD(+). The active site involves lysine 172. Residue lysine 240 coordinates NAD(+).

It belongs to the HIBADH-related family.

The protein resides in the cell membrane. Its subcellular location is the membrane raft. This is an uncharacterized protein from Bacillus subtilis (strain 168).